A 383-amino-acid chain; its full sequence is NIPA-like protein 2 (383 aa).

2 N-linked (GlcNAc...) asparagine glycosylation sites follow: Asn-23 and Asn-33. 7 helical membrane passes run Ile-46–Asn-66, Val-88–Tyr-108, Phe-110–Ile-130, Leu-144–Ile-164, Leu-177–Leu-197, Val-209–Val-229, and Leu-243–Val-263. N-linked (GlcNAc...) asparagine glycosylation is present at Asn-274. Transmembrane regions (helical) follow at residues Val-278–Tyr-298 and Phe-306–Val-326. Residues Gln-355–Val-383 form a disordered region.

The protein belongs to the NIPA family.

The protein resides in the membrane. The polypeptide is NIPA-like protein 2 (NIPAL2) (Homo sapiens (Human)).